The chain runs to 709 residues: Homeobox-leucine zipper protein HDG4 (709 aa).

Positions 61–92 (ESGSGKSTGSGHDPVENTAIEQEPPAAKKKRY) are disordered. A DNA-binding region (homeobox) is located at residues 88-147 (KKKRYHRHTASQIQQMEALFKENAHPDTKTRLRLSKKLGLSPIQVKFWFQNKRTQIKAQQ). A coiled-coil region spans residues 137–205 (QNKRTQIKAQ…LDRLRSIVSM (69 aa)). The START domain maps to 229–466 (AEEEKAIDME…LKRQCERMAS (238 aa)).

This sequence belongs to the HD-ZIP homeobox family. Class IV subfamily. Expressed in flowers.

It localises to the nucleus. Its function is as follows. Probable transcription factor. This chain is Homeobox-leucine zipper protein HDG4, found in Arabidopsis thaliana (Mouse-ear cress).